The chain runs to 173 residues: Eggshell protein (173 aa).

A signal peptide spans 1 to 18 (MKQSLTLVFLVAIGYATA). Positions 145-162 (GSGKGKGGGKGGKGGKGG) are enriched in gly residues. Residues 145 to 173 (GSGKGKGGGKGGKGGKGGTYKPSHYGGGY) form a disordered region.

The sequence is that of Eggshell protein from Schistosoma mansoni (Blood fluke).